A 222-amino-acid polypeptide reads, in one-letter code: Small ribosomal subunit protein uS7m (222 aa).

It belongs to the universal ribosomal protein uS7 family. As to quaternary structure, part of the small ribosomal subunit.

Its subcellular location is the mitochondrion. One of the primary rRNA binding proteins, it binds directly to 18S rRNA where it nucleates assembly of the head domain of the small subunit. The polypeptide is Small ribosomal subunit protein uS7m (RPS7) (Prototheca wickerhamii).